Here is a 266-residue protein sequence, read N- to C-terminus: DLA class II histocompatibility antigen, DR-1 beta chain (266 aa).

A signal peptide spans 1–29 (MVCLCFLGGSWMTALMLILMVLNPPFAWA). A beta-1 region spans residues 30 to 124 (RDTPPHFLEV…IESFTVQRRV (95 aa)). At 30–227 (RDTPPHFLEV…RAQSDSAQSK (198 aa)) the chain is on the extracellular side. Cystine bridges form between Cys44-Cys108 and Cys146-Cys202. Asn48 carries N-linked (GlcNAc...) asparagine glycosylation. A beta-2 region spans residues 125–227 (EPTVTVYPTK…RAQSDSAQSK (103 aa)). In terms of domain architecture, Ig-like C1-type spans 126-214 (PTVTVYPTKT…EHPSLTSPVT (89 aa)). Residues 228–250 (MLSGIGGFVLGLLFLAVGLFIYF) form a helical membrane-spanning segment. The Cytoplasmic portion of the chain corresponds to 251 to 266 (RNQKGHSGLQPTGLLS).

This sequence belongs to the MHC class II family.

The protein localises to the membrane. This chain is DLA class II histocompatibility antigen, DR-1 beta chain, found in Canis lupus familiaris (Dog).